We begin with the raw amino-acid sequence, 476 residues long: Cyclase-associated protein 1 (476 aa).

2 disordered regions span residues 224–262 (KPAS…KQGM) and 277–319 (GLRK…PPKM). Residues 231-243 (KGPPGAPAPPPAP) show a composition bias toward pro residues. Low complexity predominate over residues 246–256 (SAESSKPSSSS). Over residues 280–293 (KVTDDMKTKNRADR) the composition is skewed to basic and acidic residues. The region spanning 316-453 (PPKMELQMGR…PDGDWVEHAL (138 aa)) is the C-CAP/cofactor C-like domain.

Belongs to the CAP family. Expressed in roots, cotyledons, leaves, stems, flowers, pollen and shoots. Not detected in siliques.

Its function is as follows. Actin monomer binding protein that accelerates the exchange of ADP for ATP. Regulates the pool of unpolymerized ATP-actin. Key intermediate between actin-depolymerizing factor (ADF)-mediated disassembly and the profilin-based nucleation and elongation machinery. In Arabidopsis thaliana (Mouse-ear cress), this protein is Cyclase-associated protein 1 (CAP1).